Reading from the N-terminus, the 249-residue chain is Proteasome subunit alpha (249 aa).

The segment at 229–249 (EAREAEEAAEAQSSEDGGATD) is disordered.

This sequence belongs to the peptidase T1A family. As to quaternary structure, the 20S proteasome core is composed of 14 alpha and 14 beta subunits that assemble into four stacked heptameric rings, resulting in a barrel-shaped structure. The two inner rings, each composed of seven catalytic beta subunits, are sandwiched by two outer rings, each composed of seven alpha subunits. The catalytic chamber with the active sites is on the inside of the barrel. Has a gated structure, the ends of the cylinder being occluded by the N-termini of the alpha-subunits. Is capped by the proteasome-associated ATPase, ARC.

The protein resides in the cytoplasm. The protein operates within protein degradation; proteasomal Pup-dependent pathway. The formation of the proteasomal ATPase ARC-20S proteasome complex, likely via the docking of the C-termini of ARC into the intersubunit pockets in the alpha-rings, may trigger opening of the gate for substrate entry. Interconversion between the open-gate and close-gate conformations leads to a dynamic regulation of the 20S proteasome proteolysis activity. Its function is as follows. Component of the proteasome core, a large protease complex with broad specificity involved in protein degradation. The protein is Proteasome subunit alpha of Thermobifida fusca (strain YX).